Reading from the N-terminus, the 263-residue chain is 3-deoxy-manno-octulosonate cytidylyltransferase (263 aa).

It belongs to the KdsB family.

It localises to the cytoplasm. The catalysed reaction is 3-deoxy-alpha-D-manno-oct-2-ulosonate + CTP = CMP-3-deoxy-beta-D-manno-octulosonate + diphosphate. It participates in nucleotide-sugar biosynthesis; CMP-3-deoxy-D-manno-octulosonate biosynthesis; CMP-3-deoxy-D-manno-octulosonate from 3-deoxy-D-manno-octulosonate and CTP: step 1/1. The protein operates within bacterial outer membrane biogenesis; lipopolysaccharide biosynthesis. Its function is as follows. Activates KDO (a required 8-carbon sugar) for incorporation into bacterial lipopolysaccharide in Gram-negative bacteria. In Burkholderia cenocepacia (strain ATCC BAA-245 / DSM 16553 / LMG 16656 / NCTC 13227 / J2315 / CF5610) (Burkholderia cepacia (strain J2315)), this protein is 3-deoxy-manno-octulosonate cytidylyltransferase.